Consider the following 497-residue polypeptide: Xylooligosaccharide oxidase (497 aa).

The signal sequence occupies residues 1 to 16; it reads MHLLPLTVSATAVVSA. An intrachain disulfide couples Cys-30 to Cys-79. 2 N-linked (GlcNAc...) asparagine glycosylation sites follow: Asn-42 and Asn-117. One can recognise an FAD-binding PCMH-type domain in the interval 57–230; sequence LPYTPAAIAK…ASFRFKTFAA (174 aa). Residues 94-155 constitute a cross-link (6-(S-cysteinyl)-8alpha-(pros-histidyl)-FAD (His-Cys)); sequence HSYASFGLGG…GKRAFSHGTC (62 aa). Thr-154 is a binding site for substrate. N-linked (GlcNAc...) asparagine glycans are attached at residues Asn-192, Asn-233, and Asn-245. Arg-272 contributes to the substrate binding site. 2 N-linked (GlcNAc...) asparagine glycosylation sites follow: Asn-289 and Asn-307. Positions 412 and 451 each coordinate substrate.

It belongs to the oxygen-dependent FAD-linked oxidoreductase family. FAD serves as cofactor. Post-translationally, the FAD cofactor is bound via a bicovalent 6-S-cysteinyl, 8alpha-N1-histidyl FAD linkage.

The protein localises to the secreted. It carries out the reaction D-xylobiose + O2 = D-xylobiono-1,5-lactone + H2O2. The catalysed reaction is D-xylotriose + O2 = D-xylotriono-1,5-lactone + H2O2. The enzyme catalyses D-xylotetraose + O2 = D-xylotetraono-1,5-lactone + H2O2. In terms of biological role, catalyzes the selective oxidation of C1 hydroxyl moieties on mono-, oligo- and polysaccharides with concomitant reduction of molecular oxygen to hydrogen peroxide. This results in the formation of the corresponding lactones, which typically undergo spontaneous hydrolysis. Xylooligosaccharide oxidase is able to oxidize a variety of substrates including D-xylose, D-cellobiose, lactose and arabinose. The enzyme acts primarily on xylooligosaccharides, indicating that it prefers pentose-based oligosaccharides over hexose-based oligosaccharides. This is Xylooligosaccharide oxidase from Thermothelomyces thermophilus (strain ATCC 42464 / BCRC 31852 / DSM 1799) (Sporotrichum thermophile).